Consider the following 101-residue polypeptide: Large ribosomal subunit protein uL24 (101 aa).

It belongs to the universal ribosomal protein uL24 family. Part of the 50S ribosomal subunit.

Functionally, one of two assembly initiator proteins, it binds directly to the 5'-end of the 23S rRNA, where it nucleates assembly of the 50S subunit. Its function is as follows. One of the proteins that surrounds the polypeptide exit tunnel on the outside of the subunit. This is Large ribosomal subunit protein uL24 from Borreliella afzelii (strain PKo) (Borrelia afzelii).